The chain runs to 132 residues: NADH-quinone oxidoreductase subunit A 2 (132 aa).

Helical transmembrane passes span 9–29 (AWAFIAYVLGAVALCLVMLGL), 66–86 (LVAMLFVIFGIEMPFLYLWAV), and 93–113 (WAGFVEVALFVSLLLAGLFYL).

The protein belongs to the complex I subunit 3 family. NDH-1 is composed of 13 different subunits. Subunits NuoA, H, J, K, L, M, N constitute the membrane sector of the complex.

The protein resides in the cell inner membrane. It catalyses the reaction a quinone + NADH + 5 H(+)(in) = a quinol + NAD(+) + 4 H(+)(out). Its function is as follows. NDH-1 shuttles electrons from NADH, via FMN and iron-sulfur (Fe-S) centers, to quinones in the respiratory chain. The immediate electron acceptor for the enzyme in this species is believed to be ubiquinone. Couples the redox reaction to proton translocation (for every two electrons transferred, four hydrogen ions are translocated across the cytoplasmic membrane), and thus conserves the redox energy in a proton gradient. This chain is NADH-quinone oxidoreductase subunit A 2, found in Pseudomonas paraeruginosa (strain DSM 24068 / PA7) (Pseudomonas aeruginosa (strain PA7)).